The sequence spans 139 residues: Cystatin (139 aa).

A signal peptide spans 1 to 23 (MAGARGCVVLLAAALMLVGAVLG). The Secondary area of contact signature appears at 76 to 80 (QLVSG). 2 cysteine pairs are disulfide-bonded: C94–C104 and C118–C138. Position 103 is a phosphoserine (S103).

This sequence belongs to the cystatin family.

It localises to the secreted. In terms of biological role, this protein binds tightly to and inhibits a variety of thiol proteases including ficin, papain, and cathepsins B, C, H, and L. Although isolated from egg white, it is also present in serum. The sequence is that of Cystatin from Gallus gallus (Chicken).